Here is a 143-residue protein sequence, read N- to C-terminus: Large ribosomal subunit protein uL15 (143 aa).

Residues 1 to 59 form a disordered region; that stretch reads MELNTITPGQGAKHAKRRVGRGIGSGLGKTAGRGHKGQKSRSGGYHKVGFEGGQMPMQR. Residues 21–31 show a composition bias toward gly residues; the sequence is RGIGSGLGKTA.

This sequence belongs to the universal ribosomal protein uL15 family. Part of the 50S ribosomal subunit.

Its function is as follows. Binds to the 23S rRNA. The chain is Large ribosomal subunit protein uL15 from Polaromonas naphthalenivorans (strain CJ2).